The primary structure comprises 266 residues: 3-methyl-2-oxobutanoate hydroxymethyltransferase (266 aa).

Positions 45 and 84 each coordinate Mg(2+). 3-methyl-2-oxobutanoate-binding positions include 45-46 (DS), Asp-84, and Lys-112. Mg(2+) is bound at residue Glu-114. Glu-181 serves as the catalytic Proton acceptor.

The protein belongs to the PanB family. Homodecamer; pentamer of dimers. It depends on Mg(2+) as a cofactor.

The protein localises to the cytoplasm. The enzyme catalyses 3-methyl-2-oxobutanoate + (6R)-5,10-methylene-5,6,7,8-tetrahydrofolate + H2O = 2-dehydropantoate + (6S)-5,6,7,8-tetrahydrofolate. Its pathway is cofactor biosynthesis; (R)-pantothenate biosynthesis; (R)-pantoate from 3-methyl-2-oxobutanoate: step 1/2. Functionally, catalyzes the reversible reaction in which hydroxymethyl group from 5,10-methylenetetrahydrofolate is transferred onto alpha-ketoisovalerate to form ketopantoate. The chain is 3-methyl-2-oxobutanoate hydroxymethyltransferase from Pseudomonas savastanoi pv. phaseolicola (strain 1448A / Race 6) (Pseudomonas syringae pv. phaseolicola (strain 1448A / Race 6)).